A 489-amino-acid chain; its full sequence is 3-octaprenyl-4-hydroxybenzoate carboxy-lyase (489 aa).

Mn(2+) is bound at residue Asn172. Prenylated FMN-binding positions include 175–177 (IYR), 189–191 (RWL), and 194–195 (RG). Residue Glu238 participates in Mn(2+) binding. Asp287 functions as the Proton donor in the catalytic mechanism.

It belongs to the UbiD family. As to quaternary structure, homohexamer. Prenylated FMN serves as cofactor. It depends on Mn(2+) as a cofactor.

It localises to the cell membrane. The catalysed reaction is a 4-hydroxy-3-(all-trans-polyprenyl)benzoate + H(+) = a 2-(all-trans-polyprenyl)phenol + CO2. Its pathway is cofactor biosynthesis; ubiquinone biosynthesis. Functionally, catalyzes the decarboxylation of 3-octaprenyl-4-hydroxy benzoate to 2-octaprenylphenol, an intermediate step in ubiquinone biosynthesis. The sequence is that of 3-octaprenyl-4-hydroxybenzoate carboxy-lyase from Tolumonas auensis (strain DSM 9187 / NBRC 110442 / TA 4).